Consider the following 246-residue polypeptide: tRNA (guanine-N(7)-)-methyltransferase (246 aa).

The S-adenosyl-L-methionine site is built by glutamate 77, glutamate 102, aspartate 129, and aspartate 152. Aspartate 152 is a catalytic residue. Substrate is bound by residues lysine 156, aspartate 188, and 225-228 (TKFE).

This sequence belongs to the class I-like SAM-binding methyltransferase superfamily. TrmB family.

It carries out the reaction guanosine(46) in tRNA + S-adenosyl-L-methionine = N(7)-methylguanosine(46) in tRNA + S-adenosyl-L-homocysteine. Its pathway is tRNA modification; N(7)-methylguanine-tRNA biosynthesis. Its function is as follows. Catalyzes the formation of N(7)-methylguanine at position 46 (m7G46) in tRNA. The polypeptide is tRNA (guanine-N(7)-)-methyltransferase (Haemophilus influenzae (strain PittEE)).